An 83-amino-acid polypeptide reads, in one-letter code: Small ribosomal subunit protein bS16 (83 aa).

The protein belongs to the bacterial ribosomal protein bS16 family.

The chain is Small ribosomal subunit protein bS16 from Aromatoleum aromaticum (strain DSM 19018 / LMG 30748 / EbN1) (Azoarcus sp. (strain EbN1)).